Reading from the N-terminus, the 430-residue chain is MPISLEYLGPAQAPASVGDFYFLRHGKTDLNEKEVFVQGEKHWGVQGAGTNIGLNETGKRQAVLAGNVLRKLPISSVVCSPLLRAIQTAVIANIGCLCFEIDDDLKERDFGKHEGGYGPLKMFEENYPDTENTELFSMRVAKALAHAETENTLFVSHGGVLRVVAALLGVELTKEHTDNGRVLHFRRGCPQWTVEIHQSPVILISGPSRGIGKAIAENLIAHGYRMSLGARRVKDLESAFGPQSEWLHYARFDAEDNDTMAAWVTAAVEKFGRIDGLINNAGCGEPVNLEKDIDYKQFHRQWHINCVAPLRMTELCLPYLCETGSGRVVNINSMSGQRVLNPFVGYNMTKHALGGLTKTTQHVGWDRGVRAIDICPGFVATEMSAWTDLISSNDMIQPNDIANLVREAIERPNRAYVPRSEVMCMKESIH.

Position 203–227 (Leu203–Ser227) interacts with NAD(+). Ser333 provides a ligand contact to substrate. The Proton acceptor role is filled by Tyr346.

This sequence belongs to the short-chain dehydrogenases/reductases (SDR) family.

It participates in opine metabolism; mannopine biosynthesis. Its function is as follows. Reduces deoxy-fructosyl-glutamine to mannopine. The chain is Agropine synthesis reductase (mas1) from Rhizobium rhizogenes (Agrobacterium rhizogenes).